Consider the following 134-residue polypeptide: Small ribosomal subunit protein uS8 (134 aa).

This sequence belongs to the universal ribosomal protein uS8 family. As to quaternary structure, part of the 30S ribosomal subunit. Contacts proteins S5 and S12.

Its function is as follows. One of the primary rRNA binding proteins, it binds directly to 16S rRNA central domain where it helps coordinate assembly of the platform of the 30S subunit. The protein is Small ribosomal subunit protein uS8 of Thermosipho melanesiensis (strain DSM 12029 / CIP 104789 / BI429).